The chain runs to 780 residues: Copper-exporting P-type ATPase (780 aa).

One can recognise an HMA domain in the interval 2–67 (QRIQLNITGM…AVRRAALCTD (66 aa)). The Cu(+) site is built by Cys-13 and Cys-16. 6 helical membrane-spanning segments follow: residues 89 to 109 (LAVA…FAVL), 114 to 134 (FPGW…WAAW), 153 to 173 (TLIS…VFGH), 185 to 205 (ALLG…VFVL), 348 to 368 (VFVP…LIAG), and 374 to 394 (VFSA…GLAT). The active-site 4-aspartylphosphate intermediate is Asp-430. Helical transmembrane passes span 680-698 (FNMV…IAAA) and 704-722 (LVAG…SNSL).

The protein belongs to the cation transport ATPase (P-type) (TC 3.A.3) family. Type IB subfamily.

The protein resides in the cell membrane. It catalyses the reaction Cu(+)(in) + ATP + H2O = Cu(+)(out) + ADP + phosphate + H(+). In terms of biological role, involved in copper export. The sequence is that of Copper-exporting P-type ATPase (ctpA) from Mycobacterium leprae (strain TN).